Reading from the N-terminus, the 262-residue chain is Flap endonuclease Xni (262 aa).

D105 provides a ligand contact to Mg(2+). In terms of domain architecture, 5'-3' exonuclease spans 164–251 (SQFLDLMALA…NINLKDFRAN (88 aa)). K(+) contacts are provided by L172, A173, P181, I183, and I186. The segment at 185–190 (GIGPKS) is interaction with DNA.

It belongs to the Xni family. It depends on Mg(2+) as a cofactor. The cofactor is K(+).

Its function is as follows. Has flap endonuclease activity. During DNA replication, flap endonucleases cleave the 5'-overhanging flap structure that is generated by displacement synthesis when DNA polymerase encounters the 5'-end of a downstream Okazaki fragment. The chain is Flap endonuclease Xni from Shewanella putrefaciens (strain CN-32 / ATCC BAA-453).